The sequence spans 577 residues: Sensory neuron membrane protein 2 (577 aa).

Over 1 to 6 (MVQCTL) the chain is Cytoplasmic. The chain crosses the membrane as a helical span at residues 7–27 (IWAGIGAMMAVSGALLGWVVF). Residues 28-519 (PRAVHEKVIE…LMKVLSLLDV (492 aa)) are Extracellular-facing. N66, N161, N271, and N307 each carry an N-linked (GlcNAc...) asparagine glycan. Intrachain disulfides connect C316–C384, C345–C411, and C386–C400. A helical transmembrane segment spans residues 520-540 (VQWVLIGVGLLLAVLMPTVYF). The Cytoplasmic portion of the chain corresponds to 541 to 577 (VKRCRGEGSRTVSPAVTATTSAASLSTVAGVTGDRSK).

This sequence belongs to the CD36 family.

The protein localises to the cell membrane. In terms of biological role, plays an olfactory role that is not restricted to pheromone sensitivity. This chain is Sensory neuron membrane protein 2, found in Anopheles gambiae (African malaria mosquito).